Consider the following 89-residue polypeptide: Small ribosomal subunit protein bS18 (89 aa).

It belongs to the bacterial ribosomal protein bS18 family. As to quaternary structure, part of the 30S ribosomal subunit. Forms a tight heterodimer with protein bS6.

In terms of biological role, binds as a heterodimer with protein bS6 to the central domain of the 16S rRNA, where it helps stabilize the platform of the 30S subunit. This Treponema denticola (strain ATCC 35405 / DSM 14222 / CIP 103919 / JCM 8153 / KCTC 15104) protein is Small ribosomal subunit protein bS18.